The following is a 190-amino-acid chain: Small ribosomal subunit protein eS7x (190 aa).

N-acetylmethionine is present on Met-1. Residues 17–50 (TECEEQVAQALFDLENTNQELKSELKDLYINQAV) are a coiled coil.

The protein belongs to the eukaryotic ribosomal protein eS7 family.

This Arabidopsis thaliana (Mouse-ear cress) protein is Small ribosomal subunit protein eS7x (RPS7C).